The primary structure comprises 65 residues: Double gene block protein 1 (65 aa).

The tract at residues 1–41 (MDSQRTVELTNPRGRSKERGDSGGKQKNSMGRKIANDAISE) is disordered. Residues 15-24 (RSKERGDSGG) show a composition bias toward basic and acidic residues. The segment at 17–43 (KERGDSGGKQKNSMGRKIANDAISESK) is RNA-binding.

Belongs to the carmovirus double gene block protein 1 family. As to quaternary structure, homodimer.

Cell-to-cell movement. Displays RNA-binding activity. This Melon necrotic spot virus (MNSV) protein is Double gene block protein 1.